We begin with the raw amino-acid sequence, 515 residues long: UBP3-associated protein BRE5 (515 aa).

One can recognise an NTF2 domain in the interval 8–140; that stretch reads ICFAFLQNYY…FDITNDIIRF (133 aa). A compositionally biased stretch (low complexity) spans 157 to 166; that stretch reads QSNEENSVSA. Disordered regions lie at residues 157–410 and 485–515; these read QSNE…PVFS and KTVKKPTSNNPPGIFTNGTRSHRKQPLKRKD. The span at 168-201 shows a compositional bias: basic and acidic residues; the sequence is EEDKIRHESGVEKEKEKEKSPEISKPKAKKETVK. A Phosphoserine modification is found at S187. A compositionally biased stretch (polar residues) spans 202-213; it reads DTTAPTESSTQE. Composition is skewed to basic and acidic residues over residues 262–282 and 299–319; these read LNEKSHKAEKKAAPIKTKEGS and EVSDEKPVPGGVKEAETEIKP. At S282 the chain carries Phosphoserine. Residues 330–341 are compositionally biased toward polar residues; sequence SGNNASTPSSSP. The residue at position 336 (T336) is a Phosphothreonine. S340 is modified (phosphoserine). Residues 374–396 show a composition bias toward basic and acidic residues; the sequence is IRPETLPKKPTERKFEMGNRRDN. Residue S398 is modified to Phosphoserine. Residues 418-494 form the RRM domain; sequence YPIYIRGTNG…KTVKKPTSNN (77 aa). Residues 489 to 503 show a composition bias toward polar residues; it reads KPTSNNPPGIFTNGT. A compositionally biased stretch (basic residues) spans 504–515; the sequence is RSHRKQPLKRKD.

Heterotetramer with UBP3; contains two molecules of BRE5 and two molecules of UBP3. Forms a complex composed of CDC48, DOA1, deubiquitinase UBP3 and probably BRE5. Within the complex, interacts (via C-terminus) with CDC48; the interaction is direct and UBP3-independent.

Its function is as follows. Has a role in de-ubiquitination. In conjunction with UBP3, cleaves ubiquitin, leading to the subsequent mono-ubiquitination of sec23. This chain is UBP3-associated protein BRE5 (BRE5), found in Saccharomyces cerevisiae (strain ATCC 204508 / S288c) (Baker's yeast).